We begin with the raw amino-acid sequence, 439 residues long: Serine/threonine-protein kinase 2 (439 aa).

Positions 87-439 (NDDFYHISTG…IFSDWINGRN (353 aa)) constitute a Protein kinase domain. ATP is bound by residues 93–101 (ISTGGYGIV) and Lys-117. Residue Asp-307 is the Proton acceptor of the active site.

The protein belongs to the protein kinase superfamily. Ser/Thr protein kinase family. Phosphorylated in vivo. Autophosphorylated in vitro.

Its subcellular location is the host endoplasmic reticulum. The protein resides in the host endoplasmic reticulum-Golgi intermediate compartment. The enzyme catalyses L-seryl-[protein] + ATP = O-phospho-L-seryl-[protein] + ADP + H(+). The catalysed reaction is L-threonyl-[protein] + ATP = O-phospho-L-threonyl-[protein] + ADP + H(+). Functionally, essential serine-protein kinase involved in the early stage of virion morphogenesis. The protein is Serine/threonine-protein kinase 2 (OPG054) of Monkeypox virus.